Reading from the N-terminus, the 304-residue chain is Capsid protein (304 aa).

2 stretches are compositionally biased toward basic and acidic residues: residues 1-24 (MGDS…REAR) and 32-54 (FEGK…EMSL). Positions 1 to 54 (MGDSTKKAETAKDEGTSQERREARPLPTAADFEGKDTSENTDGRAADADGEMSL) are disordered.

The protein belongs to the potexviruses coat protein family.

Its subcellular location is the virion. Functionally, required for genome encapsidation. Forms ribonucleoprotein complexes along with TGB1 helicase and viral RNA. The chain is Capsid protein from Potato virus M (strain Russian) (PVM).